The sequence spans 485 residues: U4/U6 small nuclear ribonucleoprotein Prp31 homolog (485 aa).

Disordered regions lie at residues Met-1 to Val-36 and Ile-329 to Arg-361. Acidic residues predominate over residues Asp-11–Val-36. The Nop domain occupies Ile-216 to Glu-334. Pro residues predominate over residues Glu-334–Asp-348. Positions Lys-352–Arg-361 are enriched in basic residues. The Nuclear localization signal signature appears at Lys-352–Glu-365.

It belongs to the PRP31 family. In terms of assembly, component of the U4/U6-U5 tri-snRNP complex composed of the U4, U6 and U5 snRNAs and pre-mRNA-splicing factors. Interacts with STA1 and SOP1.

The protein localises to the nucleus. It is found in the cajal body. Involved in pre-mRNA splicing. Required for the assembly of the U4/U5/U6 tri-snRNP complex, one of the building blocks of the spliceosome. Functions in association with STA1 and ZOP1 in spliceosome dynamics and pre-mRNA splicing. Required for transcriptional regulation and pre-mRNA splicing of cold-responsive genes, such as LTI78/RD29A, KIN2/COR6.6 or COR15A, especially under cold stress. May play a role in stress response. Involved in transcriptional gene silencing of endogenous transposable elements, independently of the RNA-directed DNA methylation (RdDM) pathway. Seems not to participate in the small RNA biogenesis of the RdDM pathway. The protein is U4/U6 small nuclear ribonucleoprotein Prp31 homolog of Arabidopsis thaliana (Mouse-ear cress).